We begin with the raw amino-acid sequence, 289 residues long: MLRDLFVKKKKYAAIPSEQVRKDVPDGVMTKCPKCKKIMYTKEVLKNLKVCVNCGYHHPMNAWERLDSILDEGSFREYDKEMVSLNPLEFPDYEEKLESDRKKTDLNEAVVTGEGTIDDMLVVVAVMDSRFRMGSMGSVVGEKIARAVEKAYDLQVPFIIFTASGGARMQEGILSLMQMAKTSVALKKHSNAGGLFISVMTHPTTGGVSASFASLGDYNLAEPGALIGFAGRRVIEQTVREKLPEDFQTAEFLLEHGQLDAVVHRDDMRESLRKILEVHQGGEMAVWQS.

One can recognise a CoA carboxyltransferase N-terminal domain in the interval 28–289; sequence VMTKCPKCKK…QGGEMAVWQS (262 aa). Residues C32, C35, C51, and C54 each contribute to the Zn(2+) site. The segment at 32–54 adopts a C4-type zinc-finger fold; it reads CPKCKKIMYTKEVLKNLKVCVNC.

The protein belongs to the AccD/PCCB family. As to quaternary structure, acetyl-CoA carboxylase is a heterohexamer composed of biotin carboxyl carrier protein (AccB), biotin carboxylase (AccC) and two subunits each of ACCase subunit alpha (AccA) and ACCase subunit beta (AccD). Zn(2+) serves as cofactor.

Its subcellular location is the cytoplasm. The catalysed reaction is N(6)-carboxybiotinyl-L-lysyl-[protein] + acetyl-CoA = N(6)-biotinyl-L-lysyl-[protein] + malonyl-CoA. Its pathway is lipid metabolism; malonyl-CoA biosynthesis; malonyl-CoA from acetyl-CoA: step 1/1. In terms of biological role, component of the acetyl coenzyme A carboxylase (ACC) complex. Biotin carboxylase (BC) catalyzes the carboxylation of biotin on its carrier protein (BCCP) and then the CO(2) group is transferred by the transcarboxylase to acetyl-CoA to form malonyl-CoA. The polypeptide is Acetyl-coenzyme A carboxylase carboxyl transferase subunit beta (Bacillus cereus (strain ZK / E33L)).